The following is a 151-amino-acid chain: Small ribosomal subunit protein uS15 (151 aa).

The protein belongs to the universal ribosomal protein uS15 family.

The sequence is that of Small ribosomal subunit protein uS15 (RPS13) from Lumbricus rubellus (Humus earthworm).